A 500-amino-acid chain; its full sequence is Cytochrome P450 71B37 (500 aa).

A helical membrane pass occupies residues 2–22; sequence ATIWFLPLLFLSCLLLAALRL. Cysteine 440 is a heme binding site.

It belongs to the cytochrome P450 family. Heme is required as a cofactor.

The protein localises to the membrane. The chain is Cytochrome P450 71B37 (CYP71B37) from Arabidopsis thaliana (Mouse-ear cress).